The sequence spans 168 residues: Ribosome maturation factor RimM (168 aa).

In terms of domain architecture, PRC barrel spans 94–167; that stretch reads DGNYYHHQII…KVIIELLDGL (74 aa).

Belongs to the RimM family. Binds ribosomal protein uS19.

The protein resides in the cytoplasm. Its function is as follows. An accessory protein needed during the final step in the assembly of 30S ribosomal subunit, possibly for assembly of the head region. Essential for efficient processing of 16S rRNA. May be needed both before and after RbfA during the maturation of 16S rRNA. It has affinity for free ribosomal 30S subunits but not for 70S ribosomes. This Ligilactobacillus salivarius (strain UCC118) (Lactobacillus salivarius) protein is Ribosome maturation factor RimM.